We begin with the raw amino-acid sequence, 100 residues long: Osteocalcin (100 aa).

Residues 1-23 (MRALTLLALLALAALCITGQAGA) form the signal peptide. Residues 24-51 (KPSGADSSKGAAFVSKQEGSEVVKRPRR) constitute a propeptide that is removed on maturation. Positions 52–98 (YLYQWLGAPVPYPDPLEPKREVCELNPDCDELADHIGFQEAYRRFYG) constitute a Gla domain. Ca(2+)-binding residues include glutamate 68, glutamate 72, glutamate 75, and aspartate 81. Glutamate 68, glutamate 72, and glutamate 75 each carry 4-carboxyglutamate. Cysteines 74 and 80 form a disulfide.

The protein belongs to the osteocalcin/matrix Gla protein family. Gamma-carboxyglutamate residues are formed by vitamin K dependent carboxylation by GGCX. These residues are essential for the binding of calcium. Decarboxylation promotes the hormone activity.

It localises to the secreted. Functionally, the carboxylated form is one of the main organic components of the bone matrix, which constitutes 1-2% of the total bone protein: it acts as a negative regulator of bone formation and is required to limit bone formation without impairing bone resorption or mineralization. The carboxylated form binds strongly to apatite and calcium. The uncarboxylated form acts as a hormone secreted by osteoblasts, which regulates different cellular processes, such as energy metabolism, male fertility and brain development. Regulates of energy metabolism by acting as a hormone favoring pancreatic beta-cell proliferation, insulin secretion and sensitivity and energy expenditure. Uncarboxylated osteocalcin hormone also promotes testosterone production in the testes: acts as a ligand for G protein-coupled receptor GPRC6A at the surface of Leydig cells, initiating a signaling response that promotes the expression of enzymes required for testosterone synthesis in a CREB-dependent manner. Also acts as a regulator of brain development: osteocalcin hormone crosses the blood-brain barrier and acts as a ligand for GPR158 on neurons, initiating a signaling response that prevents neuronal apoptosis in the hippocampus, favors the synthesis of all monoamine neurotransmitters and inhibits that of gamma-aminobutyric acid (GABA). Osteocalcin also crosses the placenta during pregnancy and maternal osteocalcin is required for fetal brain development. The chain is Osteocalcin from Pongo pygmaeus (Bornean orangutan).